The chain runs to 142 residues: ATP synthase epsilon chain (142 aa).

It belongs to the ATPase epsilon chain family. F-type ATPases have 2 components, CF(1) - the catalytic core - and CF(0) - the membrane proton channel. CF(1) has five subunits: alpha(3), beta(3), gamma(1), delta(1), epsilon(1). CF(0) has three main subunits: a, b and c.

It is found in the cell inner membrane. Produces ATP from ADP in the presence of a proton gradient across the membrane. This Histophilus somni (strain 2336) (Haemophilus somnus) protein is ATP synthase epsilon chain.